Consider the following 276-residue polypeptide: 4-deoxy-L-threo-5-hexosulose-uronate ketol-isomerase 2 (276 aa).

Positions 194, 196, 201, and 243 each coordinate Zn(2+).

It belongs to the KduI family. Zn(2+) is required as a cofactor.

It carries out the reaction 5-dehydro-4-deoxy-D-glucuronate = 3-deoxy-D-glycero-2,5-hexodiulosonate. It functions in the pathway glycan metabolism; pectin degradation; 2-dehydro-3-deoxy-D-gluconate from pectin: step 4/5. Functionally, catalyzes the isomerization of 5-dehydro-4-deoxy-D-glucuronate to 3-deoxy-D-glycero-2,5-hexodiulosonate. The chain is 4-deoxy-L-threo-5-hexosulose-uronate ketol-isomerase 2 (kduI2) from Enterococcus faecalis (strain ATCC 700802 / V583).